The sequence spans 216 residues: Holliday junction branch migration complex subunit RuvA (216 aa).

Residues 1 to 64 are domain I; that stretch reads MISFIKGVLI…EDAQQLYGFK (64 aa). The interval 65-143 is domain II; the sequence is SKVDKKVFQE…KMANEIYAQT (79 aa). The interval 144–163 is flexible linker; sequence SGTTTTSQDSQAQQAPTSVV. Positions 164-216 are domain III; it reads LANSIFNESVDALLALGYKQKDAEKMARSAMGDATTAAEVIRKALQGSIKSKG.

This sequence belongs to the RuvA family. As to quaternary structure, homotetramer. Forms an RuvA(8)-RuvB(12)-Holliday junction (HJ) complex. HJ DNA is sandwiched between 2 RuvA tetramers; dsDNA enters through RuvA and exits via RuvB. An RuvB hexamer assembles on each DNA strand where it exits the tetramer. Each RuvB hexamer is contacted by two RuvA subunits (via domain III) on 2 adjacent RuvB subunits; this complex drives branch migration. In the full resolvosome a probable DNA-RuvA(4)-RuvB(12)-RuvC(2) complex forms which resolves the HJ.

The protein localises to the cytoplasm. Functionally, the RuvA-RuvB-RuvC complex processes Holliday junction (HJ) DNA during genetic recombination and DNA repair, while the RuvA-RuvB complex plays an important role in the rescue of blocked DNA replication forks via replication fork reversal (RFR). RuvA specifically binds to HJ cruciform DNA, conferring on it an open structure. The RuvB hexamer acts as an ATP-dependent pump, pulling dsDNA into and through the RuvAB complex. HJ branch migration allows RuvC to scan DNA until it finds its consensus sequence, where it cleaves and resolves the cruciform DNA. This Francisella tularensis subsp. holarctica (strain FTNF002-00 / FTA) protein is Holliday junction branch migration complex subunit RuvA.